The sequence spans 507 residues: Cytochrome c-type protein ImcH (507 aa).

3 helical membrane passes run 14–34 (ISLI…AFIA), 45–65 (YIGL…LILV), and 100–120 (LFIF…VASI). Heme contacts are provided by C132, C136, M140, H152, C157, C160, H161, D400, C449, C452, H453, C487, C490, H491, and E496.

This sequence belongs to the NapC/NirT/NrfH family. Binds 4 heme c groups covalently per subunit.

Its subcellular location is the cell inner membrane. Redox protein involved in a high-potential metal respiratory pathway. Is required only for electron transfer to terminal extracellular electron acceptors with redox potentials higher than -0.1 V. ImcH likely transfers electrons from the quinone pool to a periplasmic acceptor. In Geobacter sulfurreducens (strain ATCC 51573 / DSM 12127 / PCA), this protein is Cytochrome c-type protein ImcH.